The chain runs to 343 residues: UDP-N-acetylglucosamine--N-acetylmuramyl-(pentapeptide) pyrophosphoryl-undecaprenol N-acetylglucosamine transferase (343 aa).

UDP-N-acetyl-alpha-D-glucosamine is bound by residues 10–12 (TGG), N113, S174, and Q275.

It belongs to the glycosyltransferase 28 family. MurG subfamily.

It is found in the cell membrane. It carries out the reaction di-trans,octa-cis-undecaprenyl diphospho-N-acetyl-alpha-D-muramoyl-L-alanyl-D-glutamyl-meso-2,6-diaminopimeloyl-D-alanyl-D-alanine + UDP-N-acetyl-alpha-D-glucosamine = di-trans,octa-cis-undecaprenyl diphospho-[N-acetyl-alpha-D-glucosaminyl-(1-&gt;4)]-N-acetyl-alpha-D-muramoyl-L-alanyl-D-glutamyl-meso-2,6-diaminopimeloyl-D-alanyl-D-alanine + UDP + H(+). The protein operates within cell wall biogenesis; peptidoglycan biosynthesis. Its function is as follows. Cell wall formation. Catalyzes the transfer of a GlcNAc subunit on undecaprenyl-pyrophosphoryl-MurNAc-pentapeptide (lipid intermediate I) to form undecaprenyl-pyrophosphoryl-MurNAc-(pentapeptide)GlcNAc (lipid intermediate II). The protein is UDP-N-acetylglucosamine--N-acetylmuramyl-(pentapeptide) pyrophosphoryl-undecaprenol N-acetylglucosamine transferase of Wolbachia sp. subsp. Brugia malayi (strain TRS).